The primary structure comprises 520 residues: Pleckstrin homology domain-containing family O member 1-A (520 aa).

4 disordered regions span residues 1 to 23 (MKKSHLVKRGLQDANQPSSQPDK), 208 to 296 (SLDK…GHLQ), 313 to 439 (IQEQ…KSTD), and 497 to 520 (QARQRREELSKTGMASQKLQQKSP). In terms of domain architecture, PH spans 20–131 (QPDKVGWIRR…WINVLNTAIT (112 aa)). Positions 227–241 (PASNTEAQEKTSSLP) are enriched in polar residues. Composition is skewed to basic and acidic residues over residues 242-255 (RKSEISWSQEDHPR) and 333-347 (DSPRLRHLKGSDSPH). Over residues 348–361 (SKGSSSPHSANSPS) the composition is skewed to low complexity. Composition is skewed to basic and acidic residues over residues 363–385 (RAKDSPSSKSKESPHAKSKDSPR) and 396–418 (KSIDSPDSKESSSLHMKCIDLTH). Polar residues predominate over residues 420 to 439 (KGSQSPLSTGSNSPHMKSTD). The span at 497–506 (QARQRREELS) shows a compositional bias: basic and acidic residues. A compositionally biased stretch (polar residues) spans 509-520 (GMASQKLQQKSP).

Post-translationally, C-terminal fragments could be released during apoptosis via caspase-3-dependent cleavage.

Its subcellular location is the membrane. The protein resides in the nucleus. It is found in the cytoplasm. Functionally, plays a role in the regulation of the actin cytoskeleton through its interactions with actin capping protein (CP). This Danio rerio (Zebrafish) protein is Pleckstrin homology domain-containing family O member 1-A (plekho1a).